We begin with the raw amino-acid sequence, 389 residues long: Nucleic acid dioxygenase ALKBH1 (389 aa).

The tRNA-binding stretch occupies residues 86–389 (SKWQAYGLKG…VKRARINPDS (304 aa)). Residues tryptophan 144 and 175-177 (YHY) contribute to the substrate site. One can recognise a Fe2OG dioxygenase domain in the interval 208–347 (GFEDFRAEAG…RVNMTVRQVL (140 aa)). Residue 220-222 (NYY) coordinates 2-oxoglutarate. The Fe cation site is built by histidine 231, aspartate 233, and histidine 287. Aspartate 233 provides a ligand contact to substrate. Residue 338-344 (RVNMTVR) participates in 2-oxoglutarate binding.

It belongs to the alkB family. Monomer. Interacts with DNAJB6. Fe(2+) serves as cofactor. As to expression, ubiquitous.

It is found in the nucleus. The protein resides in the mitochondrion. The catalysed reaction is 2'-deoxyribonucleotide-(2'-deoxyribose 5'-phosphate)-2'-deoxyribonucleotide-DNA = a 3'-end 2'-deoxyribonucleotide-(2,3-dehydro-2,3-deoxyribose 5'-phosphate)-DNA + a 5'-end 5'-phospho-2'-deoxyribonucleoside-DNA + H(+). It carries out the reaction a methylated nucleobase within DNA + 2-oxoglutarate + O2 = a nucleobase within DNA + formaldehyde + succinate + CO2. The enzyme catalyses an N(6)-methyl-2'-deoxyadenosine in DNA + 2-oxoglutarate + O2 = a 2'-deoxyadenosine in DNA + formaldehyde + succinate + CO2. It catalyses the reaction an N(1)-methyladenosine in tRNA + 2-oxoglutarate + O2 = an adenosine in tRNA + formaldehyde + succinate + CO2. The catalysed reaction is 5-methylcytidine(34) in mitochondrial tRNA(Met) + 2 2-oxoglutarate + 2 O2 = 5-formylcytidine(34) in mitochondrial tRNA(Met) + 2 succinate + 2 CO2 + H2O. It carries out the reaction an N(3)-methylcytidine in mRNA + 2-oxoglutarate + O2 = a cytidine in mRNA + formaldehyde + succinate + CO2. The enzyme catalyses N(1)-methyladenosine(58) in tRNA + 2-oxoglutarate + O2 = adenosine(58) in tRNA + formaldehyde + succinate + CO2. In terms of biological role, dioxygenase that acts on nucleic acids, such as DNA and tRNA. Requires molecular oxygen, alpha-ketoglutarate and iron. A number of activities have been described for this dioxygenase, but recent results suggest that it mainly acts on tRNAs and mediates their demethylation or oxidation depending on the context and subcellular compartment. Mainly acts as a tRNA demethylase by removing N(1)-methyladenine from various tRNAs, with a preference for N(1)-methyladenine at position 58 (m1A58) present on a stem loop structure of tRNAs. Acts as a regulator of translation initiation and elongation in response to glucose deprivation: regulates both translation initiation, by mediating demethylation of tRNA(Met), and translation elongation, N(1)-methyladenine-containing tRNAs being preferentially recruited to polysomes to promote translation elongation. In mitochondrion, specifically interacts with mt-tRNA(Met) and mediates oxidation of mt-tRNA(Met) methylated at cytosine(34) to form 5-formylcytosine (f(5)c) at this position. mt-tRNA(Met) containing the f(5)c modification at the wobble position enables recognition of the AUA codon in addition to the AUG codon, expanding codon recognition in mitochondrial translation. Specifically demethylates DNA methylated on the 6th position of adenine (N(6)-methyladenosine) DNA. N(6)-methyladenosine (m6A) DNA is present at some L1 elements in embryonic stem cells and probably promotes their silencing. Demethylates mRNAs containing N(3)-methylcytidine modification. Also able to repair alkylated single-stranded DNA by oxidative demethylation, but with low activity. Also has DNA lyase activity and introduces double-stranded breaks at abasic sites: cleaves both single-stranded DNA and double-stranded DNA at abasic sites, with the greatest activity towards double-stranded DNA with two abasic sites. DNA lyase activity does not require alpha-ketoglutarate and iron and leads to the formation of an irreversible covalent protein-DNA adduct with the 5' DNA product. DNA lyase activity is not required during base excision repair and class switch recombination of the immunoglobulin heavy chain during B lymphocyte activation. May play a role in placental trophoblast lineage differentiation. This Homo sapiens (Human) protein is Nucleic acid dioxygenase ALKBH1.